The primary structure comprises 78 residues: MQPKFNNQAKQDKLVLTGKILEIIHGDKFRVLLENNVEVDAHLAGKMRMRRLRILPGDLVEVEFSPYDLKLGRIIGRK.

One can recognise an S1-like domain in the interval 4 to 78 (KFNNQAKQDK…LKLGRIIGRK (75 aa)).

The protein belongs to the IF-1 family. In terms of assembly, component of the 30S ribosomal translation pre-initiation complex which assembles on the 30S ribosome in the order IF-2 and IF-3, IF-1 and N-formylmethionyl-tRNA(fMet); mRNA recruitment can occur at any time during PIC assembly.

It localises to the cytoplasm. Its function is as follows. One of the essential components for the initiation of protein synthesis. Stabilizes the binding of IF-2 and IF-3 on the 30S subunit to which N-formylmethionyl-tRNA(fMet) subsequently binds. Helps modulate mRNA selection, yielding the 30S pre-initiation complex (PIC). Upon addition of the 50S ribosomal subunit IF-1, IF-2 and IF-3 are released leaving the mature 70S translation initiation complex. In Mycoplasma pneumoniae (strain ATCC 29342 / M129 / Subtype 1) (Mycoplasmoides pneumoniae), this protein is Translation initiation factor IF-1.